A 203-amino-acid chain; its full sequence is High frequency lysogenization protein HflD homolog (203 aa).

It belongs to the HflD family.

Its subcellular location is the cytoplasm. The protein resides in the cell inner membrane. The sequence is that of High frequency lysogenization protein HflD homolog from Histophilus somni (strain 2336) (Haemophilus somnus).